Here is a 711-residue protein sequence, read N- to C-terminus: Amino-acid racemase (711 aa).

The Cytoplasmic portion of the chain corresponds to 1–14; the sequence is MTKNESYSGIDYFR. A helical membrane pass occupies residues 15–35; it reads FIAALLIVAIHTSPLFSFSET. Topologically, residues 36–37 are extracellular; it reads GN. Residues 38-58 form a helical membrane-spanning segment; that stretch reads FIFTRIVAPVAVPFFFMTSGF. Over 59–78 the chain is Cytoplasmic; that stretch reads FLISRYTCNAEKLGAFIKKT. The helical transmembrane segment at 79 to 99 threads the bilayer; it reads TLIYGVAILLYIPINVYNGYF. Residues 100–117 lie on the Extracellular side of the membrane; sequence KMDNLLPNIIKDIVFDGT. The chain crosses the membrane as a helical span at residues 118-138; it reads LYHLWYLPASIIGAAIAWYLV. Residues 139–146 are Cytoplasmic-facing; that stretch reads KKVHYRKA. The chain crosses the membrane as a helical span at residues 147–167; sequence FLIASILYIIGLFGDSYYGIV. At 168-188 the chain is on the extracellular side; it reads KSVSCLNVFYNLIFQLTDYTR. Residues 189-209 form a helical membrane-spanning segment; sequence NGIFFAPIFFVLGGYISDSPN. At 210-241 the chain is on the cytoplasmic side; it reads RYRKKNYIRIYSLFCLMFGKTLTLQHFDIQKH. Residues 242-262 traverse the membrane as a helical segment; that stretch reads DSMYVLLLPSVWCLFNLLLHF. Residues 263–306 are Extracellular-facing; the sequence is RGKRRTGLRTISLDQLYHSSVYDCCNTIVCAELLHLQSLLVENS. The helical transmembrane segment at 307–327 threads the bilayer; it reads LVHYIAVCFASVVLAVVITAL. The Cytoplasmic portion of the chain corresponds to 328–711; sequence LSSLKPKKAK…EHRLNIIRRA (384 aa). The interval 336-711 is racemase; the sequence is AKHTADTDRA…EHRLNIIRRA (376 aa). The active-site Proton acceptor is Lys-376. Lys-376 carries the post-translational modification N6-(pyridoxal phosphate)lysine. Arg-470 serves as a coordination point for substrate. The active-site Proton acceptor is the Tyr-602. Met-651 is a binding site for substrate.

This sequence in the N-terminal section; belongs to the acyltransferase 3 family. In the C-terminal section; belongs to the alanine racemase family. Pyridoxal 5'-phosphate is required as a cofactor.

It is found in the cell membrane. The protein is Amino-acid racemase (vanTG) of Enterococcus faecalis (Streptococcus faecalis).